A 399-amino-acid chain; its full sequence is Serine/threonine-protein kinase PKZ1 (399 aa).

Residues 30–50 (PMQCAYQTQSHSNPEGAKRGR) form a disordered region. Positions 92–371 (WQLFDQIGAG…ADQMLQHPWM (280 aa)) constitute a Protein kinase domain. ATP contacts are provided by residues 98-106 (IGAGAFGVV) and Lys121. Asp219 (proton acceptor) is an active-site residue.

Belongs to the protein kinase superfamily. CAMK Ser/Thr protein kinase family. Interacts with BZP1.

The enzyme catalyses L-seryl-[protein] + ATP = O-phospho-L-seryl-[protein] + ADP + H(+). It carries out the reaction L-threonyl-[protein] + ATP = O-phospho-L-threonyl-[protein] + ADP + H(+). Its function is as follows. May regulate an early stage of the zoospore pathway. This chain is Serine/threonine-protein kinase PKZ1, found in Phytophthora infestans (Potato late blight agent).